The chain runs to 289 residues: Nodulation protein NolT (289 aa).

A signal peptide spans 1–33 (MFGSAHGDTTSSDTSGRRPLRLVVLPLLLALSS). The N-palmitoyl cysteine moiety is linked to residue C34. C34 is lipidated: S-diacylglycerol cysteine. The helical transmembrane segment at 233 to 253 (VAVGVGAAVFAVTCYLLFIVL) threads the bilayer.

This sequence belongs to the YscJ lipoprotein family.

It localises to the cell outer membrane. Its function is as follows. Regulates cultivar-specific nodulation of soybean. The chain is Nodulation protein NolT (nolT) from Rhizobium fredii (Sinorhizobium fredii).